A 108-amino-acid polypeptide reads, in one-letter code: uncharacterized protein (108 aa).

This is an uncharacterized protein from Archaeoglobus fulgidus (strain ATCC 49558 / DSM 4304 / JCM 9628 / NBRC 100126 / VC-16).